A 184-amino-acid chain; its full sequence is Thylakoid membrane protein slr0575 (184 aa).

2 helical membrane passes run 5 to 25 (ISLAAVGLTVGGILTITGFVA) and 31 to 51 (ATLNLAGFFYGIPLVLGGLAL).

The protein localises to the cellular thylakoid membrane. This Synechocystis sp. (strain ATCC 27184 / PCC 6803 / Kazusa) protein is Thylakoid membrane protein slr0575.